A 177-amino-acid polypeptide reads, in one-letter code: ATP synthase subunit delta (177 aa).

It belongs to the ATPase delta chain family. F-type ATPases have 2 components, F(1) - the catalytic core - and F(0) - the membrane proton channel. F(1) has five subunits: alpha(3), beta(3), gamma(1), delta(1), epsilon(1). F(0) has three main subunits: a(1), b(2) and c(10-14). The alpha and beta chains form an alternating ring which encloses part of the gamma chain. F(1) is attached to F(0) by a central stalk formed by the gamma and epsilon chains, while a peripheral stalk is formed by the delta and b chains.

It localises to the cell inner membrane. In terms of biological role, f(1)F(0) ATP synthase produces ATP from ADP in the presence of a proton or sodium gradient. F-type ATPases consist of two structural domains, F(1) containing the extramembraneous catalytic core and F(0) containing the membrane proton channel, linked together by a central stalk and a peripheral stalk. During catalysis, ATP synthesis in the catalytic domain of F(1) is coupled via a rotary mechanism of the central stalk subunits to proton translocation. Its function is as follows. This protein is part of the stalk that links CF(0) to CF(1). It either transmits conformational changes from CF(0) to CF(1) or is implicated in proton conduction. The chain is ATP synthase subunit delta from Neisseria gonorrhoeae (strain NCCP11945).